Reading from the N-terminus, the 482-residue chain is Cysteine--tRNA ligase (482 aa).

Cysteine 29 contacts Zn(2+). The 'HIGH' region signature appears at 31-41; the sequence is PTVYDSAHVGH. Zn(2+) contacts are provided by cysteine 210, histidine 235, and glutamate 239. The 'KMSKS' region motif lies at 272-276; it reads KMSKS. Lysine 275 contacts ATP.

Belongs to the class-I aminoacyl-tRNA synthetase family. As to quaternary structure, monomer. Zn(2+) is required as a cofactor.

The protein resides in the cytoplasm. It carries out the reaction tRNA(Cys) + L-cysteine + ATP = L-cysteinyl-tRNA(Cys) + AMP + diphosphate. This chain is Cysteine--tRNA ligase, found in Anaeromyxobacter sp. (strain Fw109-5).